A 1031-amino-acid polypeptide reads, in one-letter code: Toll-like receptor 9 (1031 aa).

The N-terminal stretch at 1 to 25 is a signal peptide; that stretch reads MGPCHGALHPLSLLVQAAALAVALA. The Extracellular segment spans residues 26–817; the sequence is QGTLPAFLPC…LCLDEALSWD (792 aa). A disulfide bridge links C35 with C45. 47 to 51 serves as a coordination point for DNA; the sequence is WLFLK. LRR repeat units lie at residues 62 to 85, 87 to 110, 122 to 147, 150 to 166, 167 to 190, 198 to 221, 223 to 242, 243 to 268, 283 to 306, 308 to 332, 333 to 356, 363 to 386, 390 to 413, 415 to 440, 470 to 494, 496 to 519, 520 to 543, 545 to 572, 574 to 598, 600 to 622, 627 to 650, 652 to 675, 676 to 699, 701 to 723, 724 to 747, and 749 to 772; these read RGNVTSLSLYSNRIHHLHDSDFVH, SSLRRLNLKWNCPPASLSPMHFPC, VPTLEELNLSYNSITTVPALPSSLVS, LSRTNILVLDPANLAGL, HSLRFLFLDGNCYYKNPCPQALQV, LGNLTHLSLKYNNLTAVPRGLPPS, EYLLLSYNHIITLAPEDLAN, LTALRVLDVGGNCRRCDHARNPCMEC, LNHLEGLVLKDSSLYNLNPRWFHA, GNLMVLDLSENFLYDCITKTTAFQG, LAQLRRLNLSFNYHKKVSFAHLHL, LLSLQQLDMHGIFFRSLSETTLRS, LPMLQSLHLQMNFINQAQLSIFGA, PGLRYVDLSDNRISGAMELAAATGEV, CKTLNFTLDLSRNNLVTIQPEMFAR, SRLQCLLLSRNSISQAVNGSQFMP, LTSLQVLDLSHNKLDLYHGRSFTE, PRLEALDLSYNSQPFSMQGVGHNLSFVA, LPALRYLSLAHNDIHSRVSQQLCSA, LRALDFSGNALSRMWAEGDLYLH, LRSLVRLDLSQNRLHTLLPRTLDN, PKSLRLLRLRDNYLAFFNWSSLVL, LPRLEALDLAGNQLKALSNGSLPN, TQLQRLDLSSNSISFVASSFFAL, ATRLRELNLSANALKTVEPSWFGS, and AGTLKVLDVTGNPLHCACGAAFVD. N-linked (GlcNAc...) asparagine glycosylation is present at N64. DNA contacts are provided by residues 72–77 and 95–109; these read SNRIHH and KWNCPPASLSPMHFP. An intrachain disulfide couples C98 to C110. Residue N129 is glycosylated (N-linked (GlcNAc...) asparagine). DNA-binding positions include Y132, R152, and 179–181; that span reads YYK. A disulfide bond links C178 and C184. Residue N200 is glycosylated (N-linked (GlcNAc...) asparagine). Residue Y208 coordinates DNA. Residues N210 and N242 are each glycosylated (N-linked (GlcNAc...) asparagine). 2 cysteine pairs are disulfide-bonded: C255–C268 and C258–C265. The S-palmitoyl cysteine moiety is linked to residue C258. A DNA-binding site is contributed by R262. C265 carries S-palmitoyl cysteine lipidation. A glycan (N-linked (GlcNAc...) asparagine) is linked at N340. C470 and C500 are disulfide-bonded. 2 N-linked (GlcNAc...) asparagine glycosylation sites follow: N474 and N513. N567 carries an N-linked (GlcNAc...) asparagine glycan. N-linked (GlcNAc...) asparagine glycosylation is found at N669, N694, and N699. N731 is a glycosylation site (N-linked (GlcNAc...) asparagine). Cystine bridges form between C764/C790 and C766/C809. Residues 818 to 838 form a helical membrane-spanning segment; it reads CFGLSLLTVALGLAVPMLHHL. The Cytoplasmic segment spans residues 839–1031; that stretch reads CGWDLWYCFH…NFCRGPTTAE (193 aa). The 146-residue stretch at 866-1011 folds into the TIR domain; sequence LPYDAFVVFD…SFWAQLGTAL (146 aa).

This sequence belongs to the Toll-like receptor family. In terms of assembly, monomer and homodimer. Exists as a monomer in the absence of unmethylated cytidine-phosphate-guanosine (CpG) ligand. Proteolytic processing of an insertion loop (Z-loop) is required for homodimerization upon binding to the unmethylated CpG ligand leading to its activation. Interacts with MYD88 via their respective TIR domains. Interacts with BTK. Interacts (via transmembrane domain) with UNC93B1. Interacts with CD300LH; the interaction may promote full activation of TLR9-triggered innate responses. Interacts with CNPY3 and HSP90B1; this interaction is required for proper folding in the endoplasmic reticulum. Interacts with SMPDL3B. Interacts with CD82; this interaction is essential for TLR9-dependent myddosome formation in response to CpG stimulation. Post-translationally, activated by proteolytic cleavage of the flexible loop between repeats LRR14 and LRR15 within the ectodomain. Cleavage requires UNC93B1. Proteolytically processed by first removing the majority of the ectodomain by either asparagine endopeptidase (AEP) or a cathepsin followed by a trimming event that is solely cathepsin mediated and required for optimal receptor signaling. In terms of processing, palmitoylated by ZDHHC3 in the Golgi regulates TLR9 trafficking from the Golgi to endosomes. Depalmitoylation by PPT1 controls the release of TLR9 from UNC93B1 in endosomes.

It is found in the endoplasmic reticulum membrane. Its subcellular location is the endosome. The protein localises to the lysosome. The protein resides in the cytoplasmic vesicle. It localises to the phagosome. Functionally, key component of innate and adaptive immunity. TLRs (Toll-like receptors) control host immune response against pathogens through recognition of molecular patterns specific to microorganisms. TLR9 is a nucleotide-sensing TLR which is activated by unmethylated cytidine-phosphate-guanosine (CpG) dinucleotides. Acts via MYD88 and TRAF6, leading to NF-kappa-B activation, cytokine secretion and the inflammatory response. Upon CpG stimulation, induces B-cell proliferation, activation, survival and antibody production. This is Toll-like receptor 9 (TLR9) from Felis catus (Cat).